Consider the following 393-residue polypeptide: METFLFTSESVNEGHPDKLCDQISDAVLDACLEQDPDSKVACETCTKTNMVMVFGEITTKATVDYEKIVRDTCRSIGFISDDVGLDADKCKVLVNIEQQSPDIAQGVHGHFTKRPEDIGAGDQGHMFGYATDETPELMPLSHVLATKIGAKLTEVRKNGTCRWLRPDGKTQVTVEYYNDNGAMVPVRVHTVLISTQHDETVTNEEIARDLKEHVIKPIIPEKYLDDKTIFHLNPSGRFVIGGPDGDAGLTGRKIIIDTYGGWGAHGGGAFSGKDPTKVDRSGAYIVRQSAKSVVANGMARRALVQVSYAIGVPEPFSVFVDTYGTGLIPDKEILKIVKESFDFRPGMMTINLDLKRGGNGRFLKTAAYGHFGRDDPDFTWEVVKPLKWDKPQA.

Glu-9 is a Mg(2+) binding site. An ATP-binding site is contributed by His-15. Glu-43 contacts K(+). Residues Glu-56 and Gln-99 each contribute to the L-methionine site. ATP contacts are provided by residues Asp-167–Lys-169, Ser-235–Phe-238, Asp-246, Arg-252–Lys-253, Ala-269, Lys-273, and Lys-277. Asp-246 is an L-methionine binding site. Lys-277 provides a ligand contact to L-methionine.

It belongs to the AdoMet synthase family. As to quaternary structure, homotetramer. It depends on Mn(2+) as a cofactor. Mg(2+) is required as a cofactor. Co(2+) serves as cofactor. Requires K(+) as cofactor.

The protein resides in the cytoplasm. The enzyme catalyses L-methionine + ATP + H2O = S-adenosyl-L-methionine + phosphate + diphosphate. It functions in the pathway amino-acid biosynthesis; S-adenosyl-L-methionine biosynthesis; S-adenosyl-L-methionine from L-methionine: step 1/1. Catalyzes the formation of S-adenosylmethionine from methionine and ATP. The reaction comprises two steps that are both catalyzed by the same enzyme: formation of S-adenosylmethionine (AdoMet) and triphosphate, and subsequent hydrolysis of the triphosphate. The chain is S-adenosylmethionine synthase 1 (SAMS1) from Brassica juncea (Indian mustard).